Consider the following 464-residue polypeptide: MMARRDPTSWAKRLVRAQTLQKQRRAPVGPRAPPPDEEDPRLKCKNCGAFGHTARSTRCPMKCWKAALVPATLGKKEGKENLKPWKPRVEANPGPLNKDKGEKEERPRQQDPQRKALLHMFSGKPPEKPLPNGKGSTEPSDYLRVASGPMPVHTTSKRPRLDPVLADRSATEMSGRGSVLASLSPLRKASLSSSSSLGPKERQTGAAADMPQPAVRHQGREPLLVVKPTHSRPEGGCREVPQAASKTHGLLQAARPQAQDKRPAVTSQPCPPAATHSLGLGSNLSFGPGAKRPAQAPIQACLNFPKKPRLGPFQIPESAIQGGELGAPENLQPPPAATELGPSTSPQMGRRTPAQVPSVDRQPPHSRPCLPTAQACTMSHHPAASHDGAQPLRVLFRRLENGRWSSSLLAAPSFHSPEKPGAFLAQSPHVSEKSEAPCVRVPPSVLYEDLQVSSSSEDSDSDLE.

Disordered regions lie at residues 1–42 (MMAR…DPRL), 70–389 (PATL…HDGA), and 415–437 (HSPEKPGAFLAQSPHVSEKSEAP). Composition is skewed to basic and acidic residues over residues 74 to 89 (GKKEGKENLKPWKPRV) and 97 to 114 (NKDKGEKEERPRQQDPQR). Low complexity predominate over residues 180-197 (LASLSPLRKASLSSSSSL).

This sequence belongs to the FAM90 family.

The chain is Protein FAM90A15 from Homo sapiens (Human).